Here is a 285-residue protein sequence, read N- to C-terminus: MNVFQIRDKLKQRLAHLNVDFKFDREEETLRIYRQDNYKGVTIKLNAIVAKYEVQKEKIIDEIVYYVEEAIAQMDDESIEKMTNIQIMPVIRATSFDKKTKEGHRFIIEKHTAETNIYYALDLGKSYRLIDESMLESLGLTEQQVKEMSLFNIRKLKNEYKTDEVKGNIFYFVNSNDGYDASRILNTKFLDDIYQQCEGEMLVAVPHQDVLVIADIRNKTGYDVMAHLTMEFFTKGLVPITSLSFGYEKGHFEPIFILGKNNKQKRDSNVIQRLEANRKRFNNKK.

This sequence belongs to the UPF0354 family.

The polypeptide is UPF0354 protein SH1179 (Staphylococcus haemolyticus (strain JCSC1435)).